The sequence spans 580 residues: Viral transcription factor IE2 (580 aa).

A compositionally biased stretch (basic and acidic residues) spans 1 to 11; that stretch reads MESSAKRKMDP. Disordered stretches follow at residues 1 to 30 and 99 to 161; these read MESSAKRKMDPDNPDEGPSSKVPRPETPVT and DSSS…VIIK. The segment covering 99 to 133 has biased composition (polar residues); the sequence is DSSSTGPTLTTHSCSVSSAPLNKPTPTSVAVTNTP. Glycyl lysine isopeptide (Lys-Gly) (interchain with G-Cter in SUMO) cross-links involve residues K175 and K180. An SUMO-interacting motif 1/SIM1 motif is present at residues 199 to 202; that stretch reads CIVI. Residues 200 to 208 form a non-covalent SUMO1 binding region (SIM) region; it reads IVISDSEEE. S203 and S205 each carry phosphoserine. The tract at residues 206-336 is disordered; that stretch reads EEEQGEEVET…SKRISELDNE (131 aa). Low complexity-rich tracts occupy residues 216–236, 259–271, and 302–317; these read RGATASSPSTGSGTPRVTSPT, SSSSSSSCSSASD, and AASSSLLSCGHQSSGG. The SUMO-interacting motif 1/SIM2 signature appears at 410–413; the sequence is IQII. The SUMO-interacting motif 1/SIM3 signature appears at 501-504; the sequence is VDLL.

It belongs to the HHV-5 IE2 protein family. Interacts with host SUMO-modified form of TATA-binding protein (TBP)-associated factor 12/TAF12 in a SIM-dependent manner; this interaction increases the transactivation activity of IE2. Interacts with host CHAF1A. Interacts with several components of the host transcriptional machinery including TBP, TF2B and CREB1. Interacts with host DNA replication licensing factor MCM3. Interacts with host PLSCR1; this interaction inhibits IE2 transactivating activity. Phosphorylated by host CK2 at Ser-203 and Ser-205; leading to enhanced SUMOylation. Post-translationally, SUMOylated; SUMOylation is enhanced when IE2 is phosphorylated by host CK2. The sumoylation is necessary for efficient replication of the virus and thus for the function of this viral transcription factor.

It is found in the host nucleus. Its function is as follows. Stimulates viral early and late gene expression and thus play a crucial role in the regulation of productive infection. Selectively drives host RNA Pol II transcription initiation at a subset of viral early-late and late promoters without substantially affecting Pol II transcription of expressed host genes. Mechanistically, forms a repressive complex at the major immediate-early promoter region involving direct association with host nucleosomes and TBP. Concerning activation, stimulates transcription by binding nearby, but not within, core promoter regions. In addition, activates quiescent cells to reenter the cell cycle and up-regulates several E2F-responsive genes, which are responsible for pushing the cell into S phase. In S-phase, inhibits cellular DNA synthesis and blocks further cell cycle progression. The polypeptide is Viral transcription factor IE2 (UL122) (Homo sapiens (Human)).